The chain runs to 89 residues: MSLSAEQKAEIVAKYGRSENDTGSSEVQAALYTAQIDHLQGHFKEHIHDHHSRRGLLRMVSQRRKLLDYLKRKDVAAYTALIAELGLRR.

This sequence belongs to the universal ribosomal protein uS15 family. Part of the 30S ribosomal subunit. Forms a bridge to the 50S subunit in the 70S ribosome, contacting the 23S rRNA.

Its function is as follows. One of the primary rRNA binding proteins, it binds directly to 16S rRNA where it helps nucleate assembly of the platform of the 30S subunit by binding and bridging several RNA helices of the 16S rRNA. Functionally, forms an intersubunit bridge (bridge B4) with the 23S rRNA of the 50S subunit in the ribosome. In Psychromonas ingrahamii (strain DSM 17664 / CCUG 51855 / 37), this protein is Small ribosomal subunit protein uS15.